A 187-amino-acid polypeptide reads, in one-letter code: Large ribosomal subunit protein uL6 (187 aa).

This sequence belongs to the universal ribosomal protein uL6 family. Part of the 50S ribosomal subunit.

This protein binds to the 23S rRNA, and is important in its secondary structure. It is located near the subunit interface in the base of the L7/L12 stalk, and near the tRNA binding site of the peptidyltransferase center. The polypeptide is Large ribosomal subunit protein uL6 (Roseiflexus castenholzii (strain DSM 13941 / HLO8)).